The primary structure comprises 135 residues: Endoribonuclease YbeY (135 aa).

His-102, His-106, and His-112 together coordinate Zn(2+).

This sequence belongs to the endoribonuclease YbeY family. Zn(2+) serves as cofactor.

The protein resides in the cytoplasm. Its function is as follows. Single strand-specific metallo-endoribonuclease involved in late-stage 70S ribosome quality control and in maturation of the 3' terminus of the 16S rRNA. The chain is Endoribonuclease YbeY from Rubrobacter xylanophilus (strain DSM 9941 / JCM 11954 / NBRC 16129 / PRD-1).